A 346-amino-acid chain; its full sequence is MIDSKQKIAVLGAGSWGTALAALVARHDYPTILWGRDVRVIQSIDIQHQNFRYLPSIMLPQTLRATTDLAAAVSGADWVLVAVPSYAFTETLCRLAPLLSIGVGVAWATKGFEPGSGRFLHEVAREILGGDAPLAVVTGPSFAKEVTLGLPTAVTVHGEDACFTQMVANAMHGPMFRAYTGNDVIGAELGGAMKNVLAVAIGVADGMQLGMNARAGLITRGLNEMLRLSAVIGARPETLMGLAGLGDLVLTCTGDLSRNRRLGFALGRGQSLSDAIREIGQVVESVQTSDEVMRHAEQNGVELPISEAVRAVLREEITPYAGMKVLLAREQKPEYLDILFKANCSL.

NADPH is bound by residues serine 15, tryptophan 16, arginine 36, and lysine 110. Residues lysine 110, glycine 139, and serine 141 each contribute to the sn-glycerol 3-phosphate site. Alanine 143 lines the NADPH pocket. Positions 194, 247, 257, 258, and 259 each coordinate sn-glycerol 3-phosphate. Catalysis depends on lysine 194, which acts as the Proton acceptor. Position 258 (arginine 258) interacts with NADPH. NADPH is bound by residues valine 282 and glutamate 284.

The protein belongs to the NAD-dependent glycerol-3-phosphate dehydrogenase family.

It is found in the cytoplasm. The enzyme catalyses sn-glycerol 3-phosphate + NAD(+) = dihydroxyacetone phosphate + NADH + H(+). It catalyses the reaction sn-glycerol 3-phosphate + NADP(+) = dihydroxyacetone phosphate + NADPH + H(+). It functions in the pathway membrane lipid metabolism; glycerophospholipid metabolism. In terms of biological role, catalyzes the reduction of the glycolytic intermediate dihydroxyacetone phosphate (DHAP) to sn-glycerol 3-phosphate (G3P), the key precursor for phospholipid synthesis. In Xylella fastidiosa (strain Temecula1 / ATCC 700964), this protein is Glycerol-3-phosphate dehydrogenase [NAD(P)+].